A 602-amino-acid chain; its full sequence is Laccase 1 (602 aa).

Positions Met-1 to Ala-20 are cleaved as a signal peptide. Plastocyanin-like domains are found at residues Thr-30–Lys-128 and Tyr-157–Asn-345. Cu cation contacts are provided by His-78, His-80, His-108, and His-110. 7 N-linked (GlcNAc...) asparagine glycosylation sites follow: Asn-176, Asn-241, Asn-264, Asn-388, Asn-430, Asn-454, and Asn-470. The 124-residue stretch at Asn-461 to Gly-584 folds into the Plastocyanin-like 3 domain. Cu cation contacts are provided by His-492, His-495, and His-497. An N-linked (GlcNAc...) asparagine glycan is attached at Asn-512. 4 residues coordinate Cu cation: His-566, Cys-567, His-568, and His-572.

Belongs to the multicopper oxidase family. Requires Cu cation as cofactor.

The protein localises to the cell surface. The protein operates within pigment biosynthesis. Its function is as follows. Laccase; part of the Pks1 gene cluster that mediates the biosynthesis of an anthraquinone derivative pigment that contributes to conidial pigmentation that provides protection from UV radiation, heat and cold stress. The polyketide synthase Pks1 produces 1-acetyl-2,4,6,8-tetrahydroxy-9,10-anthraquinone though condensation of acetyl-CoA with malonyl-CoA. The dehydratase EthD and the laccase Mlac1 further convert the anthraquinone derivative into the final conidial pigment. This chain is Laccase 1, found in Metarhizium album (strain ARSEF 1941).